Consider the following 348-residue polypeptide: D-alanine--D-alanine ligase (348 aa).

An ATP-grasp domain is found at Lys-132 to Thr-334. Residue Leu-162–Glu-217 participates in ATP binding. Mg(2+)-binding residues include Asp-288, Glu-301, and Asn-303.

This sequence belongs to the D-alanine--D-alanine ligase family. Requires Mg(2+) as cofactor. Mn(2+) serves as cofactor.

The protein localises to the cytoplasm. It catalyses the reaction 2 D-alanine + ATP = D-alanyl-D-alanine + ADP + phosphate + H(+). The protein operates within cell wall biogenesis; peptidoglycan biosynthesis. Cell wall formation. The protein is D-alanine--D-alanine ligase of Streptococcus pyogenes serotype M3 (strain SSI-1).